A 482-amino-acid polypeptide reads, in one-letter code: Peptide chain release factor PrfB2, chloroplastic (482 aa).

The N-terminal 21 residues, 1–21, are a transit peptide targeting the chloroplast; the sequence is MLSLIIRRSRSRFIIHGIKIS.

The protein belongs to the prokaryotic/mitochondrial release factor family.

The protein resides in the plastid. The protein localises to the chloroplast stroma. Functionally, directs the termination of translation in response to the peptide chain termination codon UGA. Required for the proper translation, stability and normal processing of UGA-containing polycistronic transcripts in chloroplasts. This Arabidopsis thaliana (Mouse-ear cress) protein is Peptide chain release factor PrfB2, chloroplastic.